The following is a 334-amino-acid chain: Glucokinase-like protein PD_0680 (334 aa).

ATP is bound at residue 18–23; it reads ADVGGT.

This sequence belongs to the bacterial glucokinase family.

The protein is Glucokinase-like protein PD_0680 of Xylella fastidiosa (strain Temecula1 / ATCC 700964).